The primary structure comprises 692 residues: Elongation factor G (692 aa).

Positions glutamate 8–leucine 283 constitute a tr-type G domain. Residues alanine 17–threonine 24, aspartate 81–histidine 85, and asparagine 135–aspartate 138 contribute to the GTP site.

This sequence belongs to the TRAFAC class translation factor GTPase superfamily. Classic translation factor GTPase family. EF-G/EF-2 subfamily.

It is found in the cytoplasm. Catalyzes the GTP-dependent ribosomal translocation step during translation elongation. During this step, the ribosome changes from the pre-translocational (PRE) to the post-translocational (POST) state as the newly formed A-site-bound peptidyl-tRNA and P-site-bound deacylated tRNA move to the P and E sites, respectively. Catalyzes the coordinated movement of the two tRNA molecules, the mRNA and conformational changes in the ribosome. The sequence is that of Elongation factor G from Caulobacter sp. (strain K31).